Here is a 1551-residue protein sequence, read N- to C-terminus: Transient receptor potential cation channel subfamily M member-like 2 (1551 aa).

Residues 1-714 (MGKDSFTPLY…WMGTMAMNTR (714 aa)) are Cytoplasmic-facing. Residues 715-730 (WWKVLVCLYLPVLIFP) lie within the membrane without spanning it. Residues 731–837 (IIYFVPDEQH…DRIMHFYSAP (107 aa)) lie on the Cytoplasmic side of the membrane. The disordered stretch occupies residues 744 to 767 (AAEREHQKSLNQKSSKVKSHKEKN). The helical transmembrane segment at 838–858 (FSKFVGNVVGYLAFIFLYAYV) threads the bilayer. Residues 859–877 (VLFNFPRFDPAKTLGGIHP) are Extracellular-facing. Residues 878 to 898 (TEIVLYFWVFTILIEEIRQLA) form a helical membrane-spanning segment. Residues E893 and Q896 each coordinate Ca(2+). Over 899–916 (AKPPKYIKDKVSVYFSDT) the chain is Cytoplasmic. A helical membrane pass occupies residues 917-937 (WNFVDIFSLTVFIIAIILRFF). Ca(2+) contacts are provided by N918 and D921. Topologically, residues 938–947 (TNSRIFTASR) are extracellular. A helical membrane pass occupies residues 948–968 (IILSLDIIFFIVRSLQIFSVN). At 969-980 (RLLGPKLVMIQK) the chain is on the cytoplasmic side. The helical transmembrane segment at 981–1001 (MMQDLAQFIIILAVFTIAYGI) threads the bilayer. Residues 1002-1018 (ALHAVMFPSPGIYARNN) are Extracellular-facing. An N-linked (GlcNAc...) asparagine glycan is attached at N1017. Positions 1019–1034 (TWVTITSVVQYPYWQM) form an intramembrane region, pore-forming. A Selectivity filter motif is present at residues 1035–1037 (YGE). Residues 1035–1059 (YGELFLDEIQGEKPKEFGEVDPDGR) lie on the Extracellular side of the membrane. Residues 1040 to 1042 (LDE) carry the Prevents fast channel inactivation motif. The chain crosses the membrane as a helical span at residues 1060-1080 (WLSPLLLAIYMVFTNILLLNL). Over 1081–1116 (LIAIFNYTFERVQEDSDKVWKFQRYDLVQEYHSRPV) the chain is Cytoplasmic. Residues 1117-1135 (FAPPLVLLGHILIFIRWVW) lie within the membrane without spanning it. Over 1136–1551 (RMCRCGHPPR…KVAKMRDAAF (416 aa)) the chain is Cytoplasmic. Positions 1184 to 1209 (LEERVRALGDRVDCINSQLNRVLDSM) form a coiled coil. A Nudix hydrolase domain is found at 1394 to 1546 (WKRTSAGVML…VSILEKVAKM (153 aa)). A Nudix box motif is present at residues 1428 to 1449 (GMVEPGQLVTQALKAEFGEEAM).

It belongs to the transient receptor (TC 1.A.4) family. LTrpC subfamily. TRPM2 sub-subfamily. In terms of assembly, homotetramer.

The protein resides in the cell membrane. Activated by phosphatidylinositol 4,5-bisphosphate (PIP2). Although PIP2 is essential for the channel activation, its contribution to the level of channel activity is minimal. Also activated by diphosphate ribose-2'-phosphate. Upon binding to ADPR, channel activation requires only a short initial cytosolic Ca(2+) increase, then the activation is sustained by the uptake of extracellular Ca(2+). Activated by 2-aminoethyl diphenylborinate (2-APB) in a Ca(2+)-dependent manner. 2-APB prevents the inactivation of the channel. In terms of biological role, nonselective, voltage-independent cation channel that mediates Ca(2+) and to a lesser extent Na(+) influx, leading to increased cytoplasmic Ca(2+) levels. Functions as a ligand-gated ion channel. Binding of ADP-ribose causes a conformation change; the channel is primed but still requires Ca(2+) binding to trigger channel opening. May have ADP-ribose pyrophosphatase activity which reduces ADP-ribose levels induced by oxidative stress, thus preventing the channel activation by reactive oxygen species. The polypeptide is Transient receptor potential cation channel subfamily M member-like 2 (Nematostella vectensis (Starlet sea anemone)).